Consider the following 104-residue polypeptide: Integration host factor subunit beta (104 aa).

Basic and acidic residues predominate over residues 83 to 95 (GKEMRERLNRDSG). The segment at 83–104 (GKEMRERLNRDSGDDAPTSDTA) is disordered.

Belongs to the bacterial histone-like protein family. As to quaternary structure, heterodimer of an alpha and a beta chain.

Its function is as follows. This protein is one of the two subunits of integration host factor, a specific DNA-binding protein that functions in genetic recombination as well as in transcriptional and translational control. In Rhodopseudomonas palustris (strain ATCC BAA-98 / CGA009), this protein is Integration host factor subunit beta.